The following is a 522-amino-acid chain: UPF0288 protein MTH_1865 (522 aa).

The protein belongs to the UPF0288 family.

This is UPF0288 protein MTH_1865 from Methanothermobacter thermautotrophicus (strain ATCC 29096 / DSM 1053 / JCM 10044 / NBRC 100330 / Delta H) (Methanobacterium thermoautotrophicum).